The primary structure comprises 949 residues: Lon protease homolog, mitochondrial (949 aa).

The N-terminal 65 residues, 1-65 (MAASTGYVRL…VLPGGVQWRG (65 aa)), are a transit peptide targeting the mitochondrion. 2 disordered regions span residues 68–94 (DSGN…TGEG) and 213–240 (EGLE…DELG). The Lon N-terminal domain occupies 112-359 (LPLIAITRNP…KALSLLKKEF (248 aa)). Residues 223 to 232 (KSRRKLKRGK) are compositionally biased toward basic residues. 512 to 519 (GPPGVGKT) is an ATP binding site. The Lon proteolytic domain occupies 748 to 938 (VTPPGVVMGL…RDIFPIAFPR (191 aa)). Catalysis depends on residues serine 844 and lysine 887.

This sequence belongs to the peptidase S16 family. As to quaternary structure, homohexamer. Organized in a ring with a central cavity. The ATP-binding and proteolytic domains (AP-domain) form a hexameric chamber, while the N-terminal domain is arranged as a trimer of dimers. DNA and RNA binding is stimulated by substrate and inhibited by ATP binding. Interacts with TWNK and mitochondrial DNA polymerase subunit POLG. In terms of tissue distribution, detected in liver &gt; heart &gt; kidney &gt; testis.

The protein resides in the mitochondrion matrix. It catalyses the reaction Hydrolysis of proteins in presence of ATP.. ATP-dependent serine protease that mediates the selective degradation of misfolded, unassembled or oxidatively damaged polypeptides as well as certain short-lived regulatory proteins in the mitochondrial matrix. Endogenous substrates include mitochondrial steroidogenic acute regulatory (StAR) protein, DELE1, helicase Twinkle (TWNK) and the large ribosomal subunit protein MRPL32/bL32m. MRPL32/bL32m is protected from degradation by LONP1 when it is bound to a nucleic acid (RNA), but TWNK is not. May also have a chaperone function in the assembly of inner membrane protein complexes. Participates in the regulation of mitochondrial gene expression and in the maintenance of the integrity of the mitochondrial genome. Binds to mitochondrial promoters and RNA in a single-stranded, site-specific, and strand-specific manner. May regulate mitochondrial DNA replication and/or gene expression using site-specific, single-stranded DNA binding to target the degradation of regulatory proteins binding to adjacent sites in mitochondrial promoters. In Mus musculus (Mouse), this protein is Lon protease homolog, mitochondrial (Lonp1).